A 375-amino-acid chain; its full sequence is Serpin B5 (375 aa).

Residues N99, N133, N188, and N361 are each glycosylated (N-linked (GlcNAc...) asparagine).

It belongs to the serpin family. Ov-serpin subfamily. Interacts with IRF6. In terms of tissue distribution, normal mammary epithelial cells.

It localises to the secreted. The protein resides in the extracellular space. Functionally, tumor suppressor. It blocks the growth, invasion, and metastatic properties of mammary tumors. As it does not undergo the S (stressed) to R (relaxed) conformational transition characteristic of active serpins, it exhibits no serine protease inhibitory activity. This Homo sapiens (Human) protein is Serpin B5 (SERPINB5).